A 359-amino-acid chain; its full sequence is Probable cinnamyl alcohol dehydrogenase 8A (359 aa).

Cys45 contacts Zn(2+). Residue Thr47 participates in NADP(+) binding. 7 residues coordinate Zn(2+): His67, Glu68, Cys98, Cys101, Cys104, Cys112, and Cys161. Residues Thr165, 186–191 (GLGGLG), 209–214 (SSSPAK), Thr249, Gly273, and 296–298 (SGG) each bind NADP(+).

This sequence belongs to the zinc-containing alcohol dehydrogenase family. Homodimer. Zn(2+) is required as a cofactor.

It carries out the reaction (E)-cinnamyl alcohol + NADP(+) = (E)-cinnamaldehyde + NADPH + H(+). It catalyses the reaction (E)-coniferol + NADP(+) = (E)-coniferaldehyde + NADPH + H(+). The enzyme catalyses (E)-sinapyl alcohol + NADP(+) = (E)-sinapaldehyde + NADPH + H(+). The catalysed reaction is (E)-4-coumaroyl alcohol + NADP(+) = (E)-4-coumaraldehyde + NADPH + H(+). It carries out the reaction (E)-caffeyl alcohol + NADP(+) = (E)-caffeyl aldehyde + NADPH + H(+). The protein operates within aromatic compound metabolism; phenylpropanoid biosynthesis. Involved in lignin biosynthesis. Catalyzes the final step specific for the production of lignin monomers. Catalyzes the NADPH-dependent reduction of coniferaldehyde, 5-hydroxyconiferaldehyde, sinapaldehyde, 4-coumaraldehyde and caffeyl aldehyde to their respective alcohols. This chain is Probable cinnamyl alcohol dehydrogenase 8A, found in Oryza sativa subsp. japonica (Rice).